A 1004-amino-acid polypeptide reads, in one-letter code: DNA-directed RNA polymerase subunit beta' (1004 aa).

Mg(2+)-binding residues include Asp-388, Asp-390, and Asp-392. Residues Cys-757, Cys-831, Cys-838, and Cys-841 each coordinate Zn(2+).

This sequence belongs to the RNA polymerase beta' chain family. The RNAP catalytic core consists of 2 alpha, 1 beta, 1 beta' and 1 omega subunit. When a sigma factor is associated with the core the holoenzyme is formed, which can initiate transcription. Mg(2+) serves as cofactor. Requires Zn(2+) as cofactor.

It catalyses the reaction RNA(n) + a ribonucleoside 5'-triphosphate = RNA(n+1) + diphosphate. DNA-dependent RNA polymerase catalyzes the transcription of DNA into RNA using the four ribonucleoside triphosphates as substrates. The chain is DNA-directed RNA polymerase subunit beta' from Oenococcus oeni (Leuconostoc oenos).